Reading from the N-terminus, the 65-residue chain is Large ribosomal subunit protein bL35 (65 aa).

Belongs to the bacterial ribosomal protein bL35 family.

The chain is Large ribosomal subunit protein bL35 from Heliobacterium modesticaldum (strain ATCC 51547 / Ice1).